The primary structure comprises 469 residues: Citrate synthase, mitochondrial (469 aa).

The transit peptide at 1–30 (MSFLTVSRLAPKLLNSKNATYFLVAARNAS) directs the protein to the mitochondrion. Residues H304 and H350 contribute to the active site. An oxaloacetate-binding site is contributed by R359. Residue D405 is part of the active site. The oxaloacetate site is built by R431 and R451.

The protein belongs to the citrate synthase family. In terms of assembly, homodimer.

Its subcellular location is the mitochondrion matrix. It carries out the reaction oxaloacetate + acetyl-CoA + H2O = citrate + CoA + H(+). Its pathway is carbohydrate metabolism; tricarboxylic acid cycle; isocitrate from oxaloacetate: step 1/2. Functionally, key enzyme of the Krebs tricarboxylic acid cycle which catalyzes the synthesis of citrate from acetyl coenzyme A and oxaloacetate. The protein is Citrate synthase, mitochondrial (cs) of Xiphias gladius (Swordfish).